The sequence spans 262 residues: Zinc import ATP-binding protein ZnuC (262 aa).

Residues Leu4–Arg220 form the ABC transporter domain. An ATP-binding site is contributed by Gly36 to Ser43. The interval Ala238–Gly262 is disordered.

This sequence belongs to the ABC transporter superfamily. Zinc importer (TC 3.A.1.15.5) family. As to quaternary structure, the complex is composed of two ATP-binding proteins (ZnuC), two transmembrane proteins (ZnuB) and a solute-binding protein (ZnuA).

The protein resides in the cell inner membrane. It catalyses the reaction Zn(2+)(out) + ATP(in) + H2O(in) = Zn(2+)(in) + ADP(in) + phosphate(in) + H(+)(in). In terms of biological role, part of the ABC transporter complex ZnuABC involved in zinc import. Responsible for energy coupling to the transport system. This is Zinc import ATP-binding protein ZnuC from Paramagnetospirillum magneticum (strain ATCC 700264 / AMB-1) (Magnetospirillum magneticum).